The following is a 1460-amino-acid chain: DNA-binding protein RFX7 (1460 aa).

Residues 1 to 34 (MAEEQQQPPPQQPDAHQQLPPSAPNSGVALPALV) are disordered. Positions 108–183 (AFSWIRNTLE…YCYSGLRKKA (76 aa)) form a DNA-binding region, RFX-type winged-helix. The short motif at 188–193 (PTLPNL) is the PxLPxI/L motif; mediates interaction with ANKRA2 and RFXANK element. The tract at residues 308–352 (QRKIQKKQQEQKLQSPLPGESAAKKSESATSNGVTNLPNGNPSIL) is disordered. S322 is subject to Phosphoserine. A compositionally biased stretch (polar residues) spans 337-352 (TSNGVTNLPNGNPSIL). Residue S379 is modified to Phosphoserine. A compositionally biased stretch (polar residues) spans 404 to 416 (SVKQAPKTPQNVP). Residues 404 to 428 (SVKQAPKTPQNVPASPGGDRSARHR) form a disordered region. 2 positions are modified to phosphoserine: S418 and S455. Polar residues predominate over residues 481–513 (TPSNSNTPLKHSASVSSATGTTEESRSVPQIKN). Disordered regions lie at residues 481-585 (TPSN…PSNE), 632-715 (TFTS…AQIP), and 917-1015 (QSVT…SVPP). Positions 515–535 (SVVSLQSPGSRSSSAGGTSAV) are enriched in low complexity. Residues 537 to 549 (VKVEPETSSDEHP) show a composition bias toward basic and acidic residues. Composition is skewed to polar residues over residues 563-583 (QTPSALLGQKSNTDGALQKPS) and 632-644 (TFTSSSSPPNGDS). The residue at position 564 (T564) is a Phosphothreonine. At S662 the chain carries Phosphoserine. K704 bears the N6-acetyllysine mark. 2 stretches are compositionally biased toward polar residues: residues 705–715 (TEGSTAGAQIP) and 917–933 (QSVTPGAPMSSHTSSTH). Pro residues predominate over residues 947 to 963 (TPTPTPTPTPTPTPTPT). Residues 971–1009 (GSQSLSRESPCSRLAQTTPVDSALGSSRHTPIGTPHSNC) are compositionally biased toward polar residues. T988 is subject to Phosphothreonine. A phosphoserine mark is found at S1178 and S1329.

It belongs to the RFX family. Interacts (via PxLPxI/L motif) with RFXANK (via ankyrin repeats). Interacts (via PxLPxI/L motif) with ANKRA2 (via ankyrin repeats). Widely expressed in many different tissue types including thymus and placenta, with high expression in brain. Expressed in both inhibitory and excitatory neurons in cortex.

It is found in the nucleus. Functionally, transcription factor. Acts as a transcriptional activator by binding to promoter regions of target genes, such as PDCD4, PIK3IP1, MXD4, PNRC1, and RFX5. Plays a role in natural killer (NK) cell maintenance and immunity. May play a role in the process of ciliogenesis in the neural tube and neural tube closure. This is DNA-binding protein RFX7 from Homo sapiens (Human).